The following is a 702-amino-acid chain: Phosphate acetyltransferase (702 aa).

Residues 375–702 (AFRYELIQRA…QATQSAADCG (328 aa)) are phosphate acetyltransferase.

This sequence in the N-terminal section; belongs to the CobB/CobQ family. It in the C-terminal section; belongs to the phosphate acetyltransferase and butyryltransferase family. In terms of assembly, homohexamer.

The protein resides in the cytoplasm. The catalysed reaction is acetyl-CoA + phosphate = acetyl phosphate + CoA. The protein operates within metabolic intermediate biosynthesis; acetyl-CoA biosynthesis; acetyl-CoA from acetate: step 2/2. Its function is as follows. Involved in acetate metabolism. In Deinococcus radiodurans (strain ATCC 13939 / DSM 20539 / JCM 16871 / CCUG 27074 / LMG 4051 / NBRC 15346 / NCIMB 9279 / VKM B-1422 / R1), this protein is Phosphate acetyltransferase (pta).